The following is a 1158-amino-acid chain: Formin-C (1158 aa).

3 disordered regions span residues 8–29, 417–523, and 990–1052; these read INGN…PSVS, PNTS…LSCL, and INNN…NNSQ. A GBD/FH3 domain is found at 20-388; the sequence is QQPQQNPSVS…EYSQRKLEMI (369 aa). Polar residues predominate over residues 417–437; that stretch reads PNTSDLFDSSTLEDTYDGNND. Low complexity predominate over residues 438-481; it reads TNSCTSISTSSTPIHISQPTTLIVPSTTPNHPPQQSQQTPPLQL. A coiled-coil region spans residues 479–515; it reads LQLQKEKEKEKEKEKEKEKEKEKEQQQQQQQSNKQST. The segment covering 482-503 has biased composition (basic and acidic residues); that stretch reads QKEKEKEKEKEKEKEKEKEKEQ. The FH2 domain occupies 601 to 998; the sequence is TKSPITPSKR…IINNNNNNNN (398 aa). The 25-residue stretch at 1134–1158 folds into the DAD domain; it reads SDDPMAVIIEALKTGSPNDMVKRAF.

Belongs to the formin homology family. Diaphanous subfamily. As to quaternary structure, interacts (via GBD/FH3 domain) with activated Rho-GTPases.

It is found in the cytoplasm. The protein localises to the cytosol. Its subcellular location is the cytoskeleton. Formins play an important role in the nucleation of actin and the formation of linear actin filaments. The polypeptide is Formin-C (forC) (Dictyostelium discoideum (Social amoeba)).